Consider the following 79-residue polypeptide: Small ribosomal subunit protein bS18 (79 aa).

It belongs to the bacterial ribosomal protein bS18 family. As to quaternary structure, part of the 30S ribosomal subunit. Forms a tight heterodimer with protein bS6.

In terms of biological role, binds as a heterodimer with protein bS6 to the central domain of the 16S rRNA, where it helps stabilize the platform of the 30S subunit. This is Small ribosomal subunit protein bS18 from Ureaplasma parvum serovar 3 (strain ATCC 27815 / 27 / NCTC 11736).